A 239-amino-acid chain; its full sequence is 2,3,4,5-tetrahydropyridine-2,6-dicarboxylate N-acetyltransferase (239 aa).

The protein belongs to the transferase hexapeptide repeat family. DapH subfamily.

The catalysed reaction is (S)-2,3,4,5-tetrahydrodipicolinate + acetyl-CoA + H2O = L-2-acetamido-6-oxoheptanedioate + CoA. The protein operates within amino-acid biosynthesis; L-lysine biosynthesis via DAP pathway; LL-2,6-diaminopimelate from (S)-tetrahydrodipicolinate (acetylase route): step 1/3. In terms of biological role, catalyzes the transfer of an acetyl group from acetyl-CoA to tetrahydrodipicolinate. This Staphylococcus aureus (strain JH9) protein is 2,3,4,5-tetrahydropyridine-2,6-dicarboxylate N-acetyltransferase.